The chain runs to 254 residues: E3 ubiquitin-protein ligase NEURL3 (254 aa).

In terms of domain architecture, NHR spans 17-174 (ALSFHGDATG…TTKAIELLDP (158 aa)). Residues 197–236 (CVICFHNTANTRLMPCGHSQFCGSCAWHIFKDTARCPMCR) form an RING-type zinc finger.

It is found in the cytoplasm. The enzyme catalyses S-ubiquitinyl-[E2 ubiquitin-conjugating enzyme]-L-cysteine + [acceptor protein]-L-lysine = [E2 ubiquitin-conjugating enzyme]-L-cysteine + N(6)-ubiquitinyl-[acceptor protein]-L-lysine.. The protein operates within protein modification; protein ubiquitination. Its function is as follows. E3 ubiquitin-protein ligase that plays a role in various biological processes such as lung development or innate immunity. Seems to utilize UBE2E1. Promotes innate antiviral response by catalyzing 'Lys-63'-linked ubiquitination of IRF7. Also inhibits hepatitis C virus assembly by directly binding to viral E1 envelope glycoprotein to disrupt its interaction with E2. Plays an essential role in TLR4-mediated activation of MAPK pathways by promoting 'Lys-48'-linked polyubiquitination of the phosphatase DUSP1/MKP1. The sequence is that of E3 ubiquitin-protein ligase NEURL3 (Neurl3) from Rattus norvegicus (Rat).